We begin with the raw amino-acid sequence, 465 residues long: UDP-N-acetylmuramate--L-alanine ligase (465 aa).

114–120 (GAHGKTT) is a binding site for ATP.

It belongs to the MurCDEF family.

It localises to the cytoplasm. The enzyme catalyses UDP-N-acetyl-alpha-D-muramate + L-alanine + ATP = UDP-N-acetyl-alpha-D-muramoyl-L-alanine + ADP + phosphate + H(+). The protein operates within cell wall biogenesis; peptidoglycan biosynthesis. In terms of biological role, cell wall formation. In Syntrophomonas wolfei subsp. wolfei (strain DSM 2245B / Goettingen), this protein is UDP-N-acetylmuramate--L-alanine ligase.